An 815-amino-acid polypeptide reads, in one-letter code: Cell division cycle protein 48 (815 aa).

Residues 1-30 (MNAPSTMTDKKPEVEHLQGENPPKDTYSAE) are disordered. Residues 8-18 (TDKKPEVEHLQ) show a composition bias toward basic and acidic residues. ATP contacts are provided by residues 267–273 (PGTGKTL), asparagine 368, histidine 404, and 541–546 (GTGKTL). The interval 794-815 (DSADSNTNGPSFGNDGADDLYA) is disordered. The span at 795–804 (SADSNTNGPS) shows a compositional bias: polar residues.

It belongs to the AAA ATPase family. As to quaternary structure, component of the ribosome quality control complex (RQC), composed of the E3 ubiquitin ligase rkr1/ltn1, rqc1 and mtr1/rqc2, as well as cdc48 and its ubiquitin-binding cofactors. RQC forms a stable complex with 60S ribosomal subunits. Interacts with ubx2 and ubx3. Interacts with lub1. Interacts with rbd2 (via C-terminal SHP box); the interaction is required for rbd2-mediated cleavage of sre1 and sre2.

It localises to the cytoplasm. The protein resides in the nucleus. It catalyses the reaction ATP + H2O = ADP + phosphate + H(+). Its activity is regulated as follows. The first ATP-binding region has low ATPase activity. The second ATP-binding region is responsible for ATPase activity. ATP binding to the first ATP-binding region induces intrinsic activity of the second ATP-binding region. While ATP binding to the first ATP-binding region appears to prevent ATP hydrolysis by the second ATP-binding region, ADP-binding to first region promotes the coordinate and cooperative ATPase cycle of the second ATP-binding region. ATP binding to the first ATP-binding region induces a conformational change, promoting the rotation of the first ATP-binding region relative to the second ATP-binding region in the hexamer. Its function is as follows. ATP-dependent chaperone which probably uses the energy provided by ATP hydrolysis to generate mechanical force to unfold substrate proteins, disassemble protein complexes, and disaggregate protein aggregates. By recruiting and promoting the degradation of ubiquitinated proteins, plays a role in the ubiquitin fusion degradation (UFD) pathway. Has a role in the endoplasmic reticulum-associated degradation (ERAD) pathway which mediates the cytoplasmic elimination of misfolded proteins exported from the ER. Involved in spindle disassembly. Component of the ribosome quality control complex (RQC), a ribosome-associated complex that mediates ubiquitination and extraction of incompletely synthesized nascent chains for proteasomal degradation. CDC48 may provide the mechanical force that dislodges the polyubiquitinated nascent peptides from the exit channel. Required for ribophagy, a process which relocalizes ribosomal particles into the vacuole for degradation in response to starvation. Has a role in substrate recognition mediating rbd2-dependent cleavage of sterol regulatory element-binding protein sre1 and sre2. The polypeptide is Cell division cycle protein 48 (Schizosaccharomyces pombe (strain 972 / ATCC 24843) (Fission yeast)).